Here is a 556-residue protein sequence, read N- to C-terminus: Dihydroxy-acid dehydratase (556 aa).

Cysteine 47 lines the [2Fe-2S] cluster pocket. Aspartate 79 serves as a coordination point for Mg(2+). Cysteine 120 lines the [2Fe-2S] cluster pocket. Mg(2+) contacts are provided by aspartate 121 and lysine 122. N6-carboxylysine is present on lysine 122. [2Fe-2S] cluster is bound at residue cysteine 192. Residue glutamate 444 participates in Mg(2+) binding. Serine 470 functions as the Proton acceptor in the catalytic mechanism.

Belongs to the IlvD/Edd family. As to quaternary structure, homodimer. [2Fe-2S] cluster is required as a cofactor. Requires Mg(2+) as cofactor.

The enzyme catalyses (2R)-2,3-dihydroxy-3-methylbutanoate = 3-methyl-2-oxobutanoate + H2O. The catalysed reaction is (2R,3R)-2,3-dihydroxy-3-methylpentanoate = (S)-3-methyl-2-oxopentanoate + H2O. The protein operates within amino-acid biosynthesis; L-isoleucine biosynthesis; L-isoleucine from 2-oxobutanoate: step 3/4. Its pathway is amino-acid biosynthesis; L-valine biosynthesis; L-valine from pyruvate: step 3/4. Functions in the biosynthesis of branched-chain amino acids. Catalyzes the dehydration of (2R,3R)-2,3-dihydroxy-3-methylpentanoate (2,3-dihydroxy-3-methylvalerate) into 2-oxo-3-methylpentanoate (2-oxo-3-methylvalerate) and of (2R)-2,3-dihydroxy-3-methylbutanoate (2,3-dihydroxyisovalerate) into 2-oxo-3-methylbutanoate (2-oxoisovalerate), the penultimate precursor to L-isoleucine and L-valine, respectively. The polypeptide is Dihydroxy-acid dehydratase (Prochlorococcus marinus (strain MIT 9211)).